Reading from the N-terminus, the 787-residue chain is Integrin beta-6 (787 aa).

Positions 1 to 21 (MGIELVCLFLLLLGRNDHVQG) are cleaved as a signal peptide. Positions 22–71 (GCAWGGAESCSDCLLTGPHCAWCSQENFTHLSGAGERCDTPANLLAKGCQ) constitute a PSI domain. Topologically, residues 22–708 (GCAWGGAESC…KDCPKPPNIP (687 aa)) are extracellular. Cystine bridges form between Cys-23-Cys-41, Cys-31-Cys-454, Cys-34-Cys-59, Cys-44-Cys-70, Cys-197-Cys-204, Cys-252-Cys-293, Cys-394-Cys-406, Cys-426-Cys-452, Cys-456-Cys-476, Cys-467-Cys-479, Cys-481-Cys-490, Cys-492-Cys-519, Cys-502-Cys-517, Cys-511-Cys-522, Cys-524-Cys-537, Cys-539-Cys-560, Cys-544-Cys-558, Cys-552-Cys-563, and Cys-565-Cys-574. Residues Asn-48 and Asn-97 are each glycosylated (N-linked (GlcNAc...) asparagine). The VWFA domain occupies 131–371 (YPVDLYYLMD…QLIISAYEEL (241 aa)). Mg(2+) contacts are provided by Asp-140, Ser-142, and Ser-144. Ser-144, Asp-147, Asp-148, and Glu-179 together coordinate Ca(2+). Positions 235, 237, 239, and 240 each coordinate Ca(2+). Glu-240 provides a ligand contact to Mg(2+). N-linked (GlcNAc...) asparagine glycosylation occurs at Asn-260. Ca(2+) contacts are provided by Asp-271 and Lys-355. N-linked (GlcNAc...) asparagine glycosylation is present at Asn-387. Asn-418 carries an N-linked (GlcNAc...) asparagine glycan. I-EGF domains lie at 456-491 (CQRE…PHCE), 492-538 (CGED…PYCQ), 539-575 (CDNF…EYCN), and 576-615 (CTTN…PTCE). 2 N-linked (GlcNAc...) asparagine glycosylation sites follow: Asn-463 and Asn-471. Asn-541 carries an N-linked (GlcNAc...) asparagine glycan. Residue Asn-575 is glycosylated (N-linked (GlcNAc...) asparagine). 9 disulfides stabilise this stretch: Cys-576-Cys-599, Cys-583-Cys-597, Cys-591-Cys-602, Cys-604-Cys-614, Cys-617-Cys-620, Cys-624-Cys-669, Cys-630-Cys-649, Cys-633-Cys-645, and Cys-677-Cys-701. A helical membrane pass occupies residues 709-729 (MIMLGVSLAILLIGVVLLCIW). The interval 730–757 (KLLVSFHDRKEVAKFEAERSKAKWQTGT) is interaction with HAX1. The Cytoplasmic portion of the chain corresponds to 730–787 (KLLVSFHDRKEVAKFEAERSKAKWQTGTNPLYRGSTSTFKNVTYKHREKHKAGLSSDG).

The protein belongs to the integrin beta chain family. Heterodimer of an alpha and a beta subunit. Interacts with FLNB. Interacts with HAX1. ITGAV:ITGB6 interacts with FBN1. ITGAV:ITGB6 interacts with TGFB1.

It localises to the cell membrane. Its subcellular location is the cell junction. The protein resides in the focal adhesion. Functionally, integrin alpha-V:beta-6 (ITGAV:ITGB6) is a receptor for fibronectin and cytotactin. It recognizes the sequence R-G-D in its ligands. ITGAV:ITGB6 acts as a receptor for fibrillin-1 (FBN1) and mediates R-G-D-dependent cell adhesion to FBN1. Integrin alpha-V:beta-6 (ITGAV:ITGB6) mediates R-G-D-dependent release of transforming growth factor beta-1 (TGF-beta-1) from regulatory Latency-associated peptide (LAP), thereby playing a key role in TGF-beta-1 activation. The protein is Integrin beta-6 (Itgb6) of Mus musculus (Mouse).